The following is a 67-amino-acid chain: Large ribosomal subunit protein uL30 (67 aa).

This sequence belongs to the universal ribosomal protein uL30 family. Part of the 50S ribosomal subunit.

The chain is Large ribosomal subunit protein uL30 from Sorangium cellulosum (strain So ce56) (Polyangium cellulosum (strain So ce56)).